Here is a 133-residue protein sequence, read N- to C-terminus: Ribosome-binding factor A (133 aa).

Belongs to the RbfA family. In terms of assembly, monomer. Binds 30S ribosomal subunits, but not 50S ribosomal subunits or 70S ribosomes.

Its subcellular location is the cytoplasm. Its function is as follows. One of several proteins that assist in the late maturation steps of the functional core of the 30S ribosomal subunit. Associates with free 30S ribosomal subunits (but not with 30S subunits that are part of 70S ribosomes or polysomes). Required for efficient processing of 16S rRNA. May interact with the 5'-terminal helix region of 16S rRNA. This is Ribosome-binding factor A from Klebsiella pneumoniae (strain 342).